A 232-amino-acid polypeptide reads, in one-letter code: Ubiquinone biosynthesis O-methyltransferase (232 aa).

Positions 36, 55, 76, and 120 each coordinate S-adenosyl-L-methionine.

It belongs to the methyltransferase superfamily. UbiG/COQ3 family.

It carries out the reaction a 3-demethylubiquinol + S-adenosyl-L-methionine = a ubiquinol + S-adenosyl-L-homocysteine + H(+). The enzyme catalyses a 3-(all-trans-polyprenyl)benzene-1,2-diol + S-adenosyl-L-methionine = a 2-methoxy-6-(all-trans-polyprenyl)phenol + S-adenosyl-L-homocysteine + H(+). It participates in cofactor biosynthesis; ubiquinone biosynthesis. In terms of biological role, O-methyltransferase that catalyzes the 2 O-methylation steps in the ubiquinone biosynthetic pathway. The sequence is that of Ubiquinone biosynthesis O-methyltransferase from Pseudomonas putida (strain W619).